A 279-amino-acid polypeptide reads, in one-letter code: Four and a half LIM domains protein 2 (279 aa).

The segment at 7–31 (CHHCNESLFGKKYILREESPYCVVC) adopts a C4-type zinc-finger fold. LIM zinc-binding domains are found at residues 40–92 (CEEC…CTDC), 101–153 (CQEC…CVPC), and 162–212 (CVQC…CLNC). A Glycyl lysine isopeptide (Lys-Gly) (interchain with G-Cter in SUMO2) cross-link involves residue Lys-78. Residues Lys-167 and Lys-220 each participate in a glycyl lysine isopeptide (Lys-Gly) (interchain with G-Cter in SUMO2) cross-link. Positions 221–275 (CAGCTNPISGLGGTKYISFEERQWHNDCFNCKKCSLSLVGRGFLTERDDILCPDC) constitute an LIM zinc-binding 4 domain. Ser-238 carries the post-translational modification Phosphoserine.

Interacts with ZNF638 and TTN/titin. Interacts with E4F1. Interacts with GRB7. Interacts with SIRT1 and FOXO1. Interacts with CEFIP. Interacts with calcineurin. Interacts with FOXK1. In terms of tissue distribution, expressed in skeletal muscle and heart.

The protein localises to the cytoplasm. It localises to the nucleus. Its subcellular location is the myofibril. It is found in the sarcomere. The protein resides in the z line. May function as a molecular transmitter linking various signaling pathways to transcriptional regulation. Negatively regulates the transcriptional repressor E4F1 and may function in cell growth. Inhibits the transcriptional activity of FOXO1 and its apoptotic function by enhancing the interaction of FOXO1 with SIRT1 and FOXO1 deacetylation. Negatively regulates the calcineurin/NFAT signaling pathway in cardiomyocytes. This is Four and a half LIM domains protein 2 (FHL2) from Homo sapiens (Human).